The primary structure comprises 426 residues: Synaptotagmin-13 (426 aa).

The Vesicular portion of the chain corresponds to 1-6 (MVLSVP). Residues 7-29 (VIALGATLGTATSILALCGVTCL) traverse the membrane as a helical segment. Over 30–426 (CRHMHPKKGL…QIAMWHQLHL (397 aa)) the chain is Cytoplasmic. C2 domains lie at 158–275 (QAPK…AQWG) and 287–422 (GAGE…AMWH).

Belongs to the synaptotagmin family. As to quaternary structure, interacts with NRXN1. Expressed in brain, pancreas and kidney.

The protein localises to the membrane. In terms of biological role, may be involved in transport vesicle docking to the plasma membrane. This is Synaptotagmin-13 (SYT13) from Homo sapiens (Human).